Consider the following 444-residue polypeptide: Tubulin beta-4 chain (444 aa).

GTP contacts are provided by Gln-11, Glu-69, Ser-138, Gly-142, Thr-143, Gly-144, Asn-204, and Asn-226. Glu-69 is a binding site for Mg(2+).

Belongs to the tubulin family. As to quaternary structure, dimer of alpha and beta chains. A typical microtubule is a hollow water-filled tube with an outer diameter of 25 nm and an inner diameter of 15 nM. Alpha-beta heterodimers associate head-to-tail to form protofilaments running lengthwise along the microtubule wall with the beta-tubulin subunit facing the microtubule plus end conferring a structural polarity. Microtubules usually have 13 protofilaments but different protofilament numbers can be found in some organisms and specialized cells. Mg(2+) serves as cofactor.

It is found in the cytoplasm. It localises to the cytoskeleton. Functionally, tubulin is the major constituent of microtubules, a cylinder consisting of laterally associated linear protofilaments composed of alpha- and beta-tubulin heterodimers. Microtubules grow by the addition of GTP-tubulin dimers to the microtubule end, where a stabilizing cap forms. Below the cap, tubulin dimers are in GDP-bound state, owing to GTPase activity of alpha-tubulin. The protein is Tubulin beta-4 chain (TUBB4) of Arabidopsis thaliana (Mouse-ear cress).